The sequence spans 1404 residues: DNA-directed RNA polymerase subunit beta' (1404 aa).

Cys-70, Cys-72, Cys-85, and Cys-88 together coordinate Zn(2+). Positions 458, 460, and 462 each coordinate Mg(2+). Residues Cys-813, Cys-887, Cys-894, and Cys-897 each coordinate Zn(2+). The disordered stretch occupies residues 1377–1404 (ERRAIAESEAAELEASQAETSDENAAAE).

The protein belongs to the RNA polymerase beta' chain family. In terms of assembly, the RNAP catalytic core consists of 2 alpha, 1 beta, 1 beta' and 1 omega subunit. When a sigma factor is associated with the core the holoenzyme is formed, which can initiate transcription. It depends on Mg(2+) as a cofactor. The cofactor is Zn(2+).

It catalyses the reaction RNA(n) + a ribonucleoside 5'-triphosphate = RNA(n+1) + diphosphate. Its function is as follows. DNA-dependent RNA polymerase catalyzes the transcription of DNA into RNA using the four ribonucleoside triphosphates as substrates. This Polaromonas naphthalenivorans (strain CJ2) protein is DNA-directed RNA polymerase subunit beta'.